The chain runs to 322 residues: Ribosomal RNA small subunit methyltransferase H (322 aa).

S-adenosyl-L-methionine-binding positions include 47 to 49 (GGH), D67, F93, D112, and Q119.

It belongs to the methyltransferase superfamily. RsmH family.

The protein localises to the cytoplasm. It carries out the reaction cytidine(1402) in 16S rRNA + S-adenosyl-L-methionine = N(4)-methylcytidine(1402) in 16S rRNA + S-adenosyl-L-homocysteine + H(+). Its function is as follows. Specifically methylates the N4 position of cytidine in position 1402 (C1402) of 16S rRNA. The chain is Ribosomal RNA small subunit methyltransferase H from Stenotrophomonas maltophilia (strain R551-3).